We begin with the raw amino-acid sequence, 329 residues long: Phenylalanine--tRNA ligase alpha subunit (329 aa).

Glutamate 246 contacts Mg(2+).

Belongs to the class-II aminoacyl-tRNA synthetase family. Phe-tRNA synthetase alpha subunit type 1 subfamily. As to quaternary structure, tetramer of two alpha and two beta subunits. Mg(2+) serves as cofactor.

Its subcellular location is the cytoplasm. It catalyses the reaction tRNA(Phe) + L-phenylalanine + ATP = L-phenylalanyl-tRNA(Phe) + AMP + diphosphate + H(+). This Helicobacter hepaticus (strain ATCC 51449 / 3B1) protein is Phenylalanine--tRNA ligase alpha subunit.